The sequence spans 227 residues: Lipoprotein-releasing system ATP-binding protein LolD (227 aa).

One can recognise an ABC transporter domain in the interval 6–227; the sequence is LEMRGITKSY…RLDAGQLSDV (222 aa). 43–50 serves as a coordination point for ATP; it reads APSGAGKS.

This sequence belongs to the ABC transporter superfamily. Lipoprotein translocase (TC 3.A.1.125) family. As to quaternary structure, the complex is composed of two ATP-binding proteins (LolD) and two transmembrane proteins (LolC and LolE).

Its subcellular location is the cell inner membrane. Functionally, part of the ABC transporter complex LolCDE involved in the translocation of mature outer membrane-directed lipoproteins, from the inner membrane to the periplasmic chaperone, LolA. Responsible for the formation of the LolA-lipoprotein complex in an ATP-dependent manner. The chain is Lipoprotein-releasing system ATP-binding protein LolD from Roseobacter denitrificans (strain ATCC 33942 / OCh 114) (Erythrobacter sp. (strain OCh 114)).